The primary structure comprises 157 residues: Protein PEROXIN-4 (157 aa).

Residues 3-153 (ASRARLFKEY…AQMYTRLAAM (151 aa)) enclose the UBC core domain. Catalysis depends on Cys90, which acts as the Glycyl thioester intermediate.

This sequence belongs to the ubiquitin-conjugating enzyme family. Interacts with PEX22.

It localises to the peroxisome membrane. The catalysed reaction is S-ubiquitinyl-[E1 ubiquitin-activating enzyme]-L-cysteine + [E2 ubiquitin-conjugating enzyme]-L-cysteine = [E1 ubiquitin-activating enzyme]-L-cysteine + S-ubiquitinyl-[E2 ubiquitin-conjugating enzyme]-L-cysteine.. The protein operates within protein modification; protein ubiquitination. In terms of biological role, required for peroxisome biogenesis. Necessary for the developmental elimination of obsolete peroxisome matrix proteins. May be involved in the ubiquitination of PEX5, targeting it for recycling. Accepts the ubiquitin from the E1 complex and catalyzes its covalent attachment to other proteins. In Arabidopsis thaliana (Mouse-ear cress), this protein is Protein PEROXIN-4 (PEX4).